Reading from the N-terminus, the 994-residue chain is Chromatin modification-related protein vid21 (994 aa).

2 disordered regions span residues 122 to 275 (PDNL…APPV) and 288 to 308 (PKVD…ENDV). 5 stretches are compositionally biased toward basic and acidic residues: residues 158 to 171 (TIHK…KETI), 178 to 191 (KEVE…EEKG), 204 to 233 (LTEE…KEHE), 254 to 265 (VESKEVKKKEVS), and 288 to 305 (PKVD…KVTE). Phosphoserine is present on residues Ser-298 and Ser-378. The HSA domain maps to 475-548 (PKRQNEMPRL…SKNKKPYMQE (74 aa)). A disordered region spans residues 671–693 (SFMEKKARSDENQLDGNKIKDDN). Basic and acidic residues predominate over residues 672 to 693 (FMEKKARSDENQLDGNKIKDDN). Residues 713–773 (KDIRPEAPWL…DCFERWIQVD (61 aa)) form the Myb-like domain. 2 disordered regions span residues 857 to 880 (TMTK…PSPL) and 975 to 994 (EQIH…ERTQ). Residues 880-912 (LELSRLKSEREAQIQQIQAQRNFAQLQSQNRAL) adopt a coiled-coil conformation.

This sequence belongs to the EAF1 family. Component of the NuA4 histone acetyltransferase complex.

It is found in the nucleus. Component of the NuA4 histone acetyltransferase complex which is involved in transcriptional activation of selected genes principally by acetylation of nucleosomal histone H4 and H2A. The NuA4 complex is also involved in DNA repair. This Schizosaccharomyces pombe (strain 972 / ATCC 24843) (Fission yeast) protein is Chromatin modification-related protein vid21 (vid21).